The primary structure comprises 315 residues: Methionyl-tRNA formyltransferase (315 aa).

117–120 (SLLP) is a binding site for (6S)-5,6,7,8-tetrahydrofolate.

It belongs to the Fmt family.

It carries out the reaction L-methionyl-tRNA(fMet) + (6R)-10-formyltetrahydrofolate = N-formyl-L-methionyl-tRNA(fMet) + (6S)-5,6,7,8-tetrahydrofolate + H(+). Its function is as follows. Attaches a formyl group to the free amino group of methionyl-tRNA(fMet). The formyl group appears to play a dual role in the initiator identity of N-formylmethionyl-tRNA by promoting its recognition by IF2 and preventing the misappropriation of this tRNA by the elongation apparatus. This Methylibium petroleiphilum (strain ATCC BAA-1232 / LMG 22953 / PM1) protein is Methionyl-tRNA formyltransferase.